Reading from the N-terminus, the 170-residue chain is Adenine phosphoribosyltransferase (170 aa).

This sequence belongs to the purine/pyrimidine phosphoribosyltransferase family. In terms of assembly, homodimer.

It is found in the cytoplasm. The catalysed reaction is AMP + diphosphate = 5-phospho-alpha-D-ribose 1-diphosphate + adenine. It participates in purine metabolism; AMP biosynthesis via salvage pathway; AMP from adenine: step 1/1. Its function is as follows. Catalyzes a salvage reaction resulting in the formation of AMP, that is energically less costly than de novo synthesis. The sequence is that of Adenine phosphoribosyltransferase from Cenarchaeum symbiosum (strain A).